Reading from the N-terminus, the 409-residue chain is Adenosine receptor A2a (409 aa).

Residues 1–4 are Extracellular-facing; sequence MSSS. Residues 5-29 form a helical membrane-spanning segment; that stretch reads VYITVELVIAVLAILGNVLVCWAVW. The Cytoplasmic segment spans residues 30–39; sequence INSNLQNVTN. A helical transmembrane segment spans residues 40–63; sequence YFVVSLAAADIAVGVLAIPFAITI. Topologically, residues 64–74 are extracellular; the sequence is STGFCAACHGC. 3 disulfide bridges follow: Cys68-Cys156, Cys71-Cys143, and Cys74-Cys163. The helical transmembrane segment at 75–97 threads the bilayer; it reads LFFACFVLVLTQSSIFSLLTITI. The Cytoplasmic portion of the chain corresponds to 98-117; the sequence is DRYIAIRIPLRYNGLVTCTR. A helical membrane pass occupies residues 118–140; the sequence is AKGIIAICWVLSFAIGLTPMLGW. Over 141–170 the chain is Extracellular; that stretch reads NNCSQPKGDKNHSESCDEGQVTCLFEDVVP. 2 N-linked (GlcNAc...) asparagine glycosylation sites follow: Asn142 and Asn151. Glu166 contacts adenosine. The chain crosses the membrane as a helical span at residues 171–195; that stretch reads MNYMVYYNFFAFVLVPLLLMLGIYL. At 196–231 the chain is on the cytoplasmic side; it reads RIFLAARRQLKQMESQPLPGERTRSTLQKEVHPAKS. Residues 232–255 form a helical membrane-spanning segment; the sequence is LAIIVGLFALCCLPLNIINCFTFF. Asn250 lines the adenosine pocket. Cys256 and Cys259 are joined by a disulfide. Topologically, residues 256–263 are extracellular; sequence CPECDHAP. The helical transmembrane segment at 264–287 threads the bilayer; sequence PWLMYLTIILSHGNSVVNPLIYAY. Adenosine contacts are provided by Ser274 and His275. Topologically, residues 288–409 are cytoplasmic; it reads RIREFRQTFR…PPAHGGAGVS (122 aa). Disordered regions lie at residues 316 to 336 and 369 to 409; these read TSAR…LRLN and QRSH…AGVS.

Belongs to the G-protein coupled receptor 1 family. In terms of assembly, interacts (via cytoplasmic C-terminal domain) with USP4; the interaction is direct. May interact with DRD4. Interacts with NECAB2. Interacts (via cytoplasmic C-terminal domain) with GAS2L2; interaction enhances receptor-mediated adenylyl cyclase activity. Ubiquitinated. Deubiquitinated by USP4; leading to stabilization and expression at the cell surface.

Its subcellular location is the cell membrane. Receptor for adenosine. The activity of this receptor is mediated by G proteins which activate adenylyl cyclase. The chain is Adenosine receptor A2a (ADORA2A) from Cavia porcellus (Guinea pig).